A 453-amino-acid polypeptide reads, in one-letter code: AP-4 complex subunit mu-1 (453 aa).

The MHD domain maps to lysine 184–arginine 452.

It belongs to the adaptor complexes medium subunit family. Adaptor protein complex 4 (AP-4) is a heterotetramer composed of two large adaptins (epsilon-type subunit AP4E1 and beta-type subunit AP4B1), a medium adaptin (mu-type subunit AP4M1) and a small adaptin (sigma-type AP4S1). Interacts with tyrosine-based sorting signals on the cytoplasmic tail of cargo proteins such as APP, ATG9A, LAMP2 and NAGPA. Interacts with the C-terminal domain of GRID2. Interacts with GRIA1 and GRIA2; the interaction is indirect via CACNG3. Interacts with CACNG3; CACNG3 associates GRIA1 and GRIA2 with the adaptor protein complex 4 (AP-4) to target them to the somatodendritic compartment of neurons. Interacts with HOOK1 and HOOK2; the interactions are direct, mediate the interaction between FTS-Hook-FHIP (FHF) complex and AP-4 and the perinuclear distribution of AP-4. In terms of tissue distribution, ubiquitous. Highly expressed in testis and lowly expressed in brain and lung.

Its subcellular location is the golgi apparatus. It is found in the trans-Golgi network membrane. It localises to the early endosome. Component of the adaptor protein complex 4 (AP-4). Adaptor protein complexes are vesicle coat components involved both in vesicle formation and cargo selection. They control the vesicular transport of proteins in different trafficking pathways. AP-4 forms a non clathrin-associated coat on vesicles departing the trans-Golgi network (TGN) and may be involved in the targeting of proteins from the trans-Golgi network (TGN) to the endosomal-lysosomal system. It is also involved in protein sorting to the basolateral membrane in epithelial cells and the proper asymmetric localization of somatodendritic proteins in neurons. Within AP-4, the mu-type subunit AP4M1 is directly involved in the recognition and binding of tyrosine-based sorting signals found in the cytoplasmic part of cargos. The adaptor protein complex 4 (AP-4) may also recognize other types of sorting signal. This is AP-4 complex subunit mu-1 from Homo sapiens (Human).